A 323-amino-acid polypeptide reads, in one-letter code: Phosphate acetyltransferase (323 aa).

It belongs to the phosphate acetyltransferase and butyryltransferase family.

Its subcellular location is the cytoplasm. The enzyme catalyses acetyl-CoA + phosphate = acetyl phosphate + CoA. It functions in the pathway metabolic intermediate biosynthesis; acetyl-CoA biosynthesis; acetyl-CoA from acetate: step 2/2. The protein is Phosphate acetyltransferase (pta) of Bacillus subtilis (strain 168).